The primary structure comprises 70 residues: UPF0270 protein VV1_1320 (70 aa).

This sequence belongs to the UPF0270 family.

In Vibrio vulnificus (strain CMCP6), this protein is UPF0270 protein VV1_1320.